A 269-amino-acid polypeptide reads, in one-letter code: Putative 12-oxophytodienoate reductase-like protein 2A (269 aa).

FMN contacts are provided by residues 28-30 (PLT) and Gln-103. 175-178 (HGAH) contacts substrate. The active-site Proton donor is the Tyr-180. Position 227 (Arg-227) interacts with FMN.

It belongs to the NADH:flavin oxidoreductase/NADH oxidase family. It depends on FMN as a cofactor.

Its function is as follows. Putative oxophytodienoate reductase that may be involved in the biosynthesis or metabolism of oxylipin signaling molecules. The chain is Putative 12-oxophytodienoate reductase-like protein 2A from Arabidopsis thaliana (Mouse-ear cress).